We begin with the raw amino-acid sequence, 1647 residues long: Putative RNA exonuclease pqe-1 (1647 aa).

4 disordered regions span residues 1 to 199 (MFNG…QVQN), 274 to 393 (QTPA…TSLP), 515 to 619 (MMQQ…KPVI), and 641 to 665 (QVKQ…PTAR). Low complexity-rich tracts occupy residues 30–64 (GPSQ…SGAS) and 99–131 (TQPQ…AAAA). Over residues 143-170 (SREQGNAHQPTAGQIPQSSNQPAQQTHN) the composition is skewed to polar residues. Composition is skewed to low complexity over residues 274-297 (QTPA…NPQQ) and 515-526 (MMQQQAMQMQMQ). Residues 527–540 (NPPPVHQQPPPQQP) are compositionally biased toward pro residues. Over residues 541–555 (PQQQRQKQQRSQPAP) the composition is skewed to low complexity. Positions 592–601 (SKIEPVDVKP) are enriched in basic and acidic residues. Positions 650 to 664 (SSTSDATKSDAAPTA) are enriched in low complexity. Residues 686–726 (SAKKFERMKAEAEDKEDMKKKIAALQEALFNIQEERRVEKE) adopt a coiled-coil conformation. Polar residues predominate over residues 736–756 (AVPQNQPASSVQIAQVSTSES). The interval 736–1174 (AVPQNQPASS…LRNKKHTTEE (439 aa)) is disordered. Positions 761–772 (TSEAAATETMTS) are enriched in low complexity. Acidic residues predominate over residues 783-793 (TEGEQEEDEDE). The span at 822 to 833 (RSDEKREKRHVS) shows a compositional bias: basic and acidic residues. The span at 878–905 (DNEDDDADSFVVGDDEPIEYEEEDEDDM) shows a compositional bias: acidic residues. Positions 977–992 (TPTASSSMSSSTLSYC) are enriched in low complexity. A compositionally biased stretch (basic and acidic residues) spans 1018 to 1031 (KTREENRERKRLAQ). Positions 1038-1054 (SETTGVRRTLRSTQDNS) are enriched in polar residues. Composition is skewed to basic and acidic residues over residues 1076–1088 (AKSS…EKQK) and 1139–1174 (NHTE…TTEE). Residues 1142 to 1187 (EMLDKRNKESEEKRRKDRDELERLRNKKHTTEEEKIKMARLQNALK) adopt a coiled-coil conformation. The 161-residue stretch at 1477 to 1637 (RVYALDCEMV…IFYGLRNPES (161 aa)) folds into the Exonuclease domain.

The protein belongs to the REXO1/REXO3 family. Expressed in the excretory canal, vulval cells, the intestine and in head and tail neurons including ASH, RIC and AIZ neurons.

It localises to the nucleus. Functionally, putative RNA exonuclease which protects neurons from the toxic effects of expanded poly-Q disease proteins. It is unknown whether this is via participation in the pathogenic mechanism underlying poly-Q-induced neurodegeneration or if it is by acting as a genetic modifier of the age of onset or progression of neurodegeneration. Regulates gene expression in neurons. The chain is Putative RNA exonuclease pqe-1 from Caenorhabditis elegans.